The chain runs to 179 residues: Large ribosomal subunit protein uL5 (179 aa).

The protein belongs to the universal ribosomal protein uL5 family. Part of the 50S ribosomal subunit; part of the 5S rRNA/L5/L18/L25 subcomplex. Contacts the 5S rRNA and the P site tRNA. Forms a bridge to the 30S subunit in the 70S ribosome.

In terms of biological role, this is one of the proteins that bind and probably mediate the attachment of the 5S RNA into the large ribosomal subunit, where it forms part of the central protuberance. In the 70S ribosome it contacts protein S13 of the 30S subunit (bridge B1b), connecting the 2 subunits; this bridge is implicated in subunit movement. Contacts the P site tRNA; the 5S rRNA and some of its associated proteins might help stabilize positioning of ribosome-bound tRNAs. This is Large ribosomal subunit protein uL5 from Pasteurella multocida (strain Pm70).